Reading from the N-terminus, the 347-residue chain is N-acetyl-gamma-glutamyl-phosphate reductase (347 aa).

The active site involves Cys-150.

The protein belongs to the NAGSA dehydrogenase family. Type 1 subfamily.

It localises to the cytoplasm. It catalyses the reaction N-acetyl-L-glutamate 5-semialdehyde + phosphate + NADP(+) = N-acetyl-L-glutamyl 5-phosphate + NADPH + H(+). Its pathway is amino-acid biosynthesis; L-arginine biosynthesis; N(2)-acetyl-L-ornithine from L-glutamate: step 3/4. In terms of biological role, catalyzes the NADPH-dependent reduction of N-acetyl-5-glutamyl phosphate to yield N-acetyl-L-glutamate 5-semialdehyde. This Halothermothrix orenii (strain H 168 / OCM 544 / DSM 9562) protein is N-acetyl-gamma-glutamyl-phosphate reductase.